The following is a 196-amino-acid chain: Large ribosomal subunit protein mL66 (196 aa).

The N-terminal 34 residues, 1–34, are a transit peptide targeting the mitochondrion; that stretch reads MAALRRLVSGCGRQLQAFLAGPAATGWLWLPARG.

Belongs to the bacterial ribosomal protein bS18 family. Mitochondrion-specific ribosomal protein mL66 subfamily. As to quaternary structure, component of the mitochondrial ribosome small subunit (28S) which comprises a 12S rRNA and about 30 distinct proteins.

It is found in the mitochondrion. The chain is Large ribosomal subunit protein mL66 (Mrps18a) from Mus musculus (Mouse).